The sequence spans 293 residues: Histamine N-methyltransferase A (293 aa).

A substrate-binding site is contributed by Glu28. Positions 60, 89, 94, 120, and 142 each coordinate S-adenosyl-L-methionine. A substrate-binding site is contributed by Asn283.

The protein belongs to the class I-like SAM-binding methyltransferase superfamily. HNMT family. As to quaternary structure, monomer.

The protein resides in the cytoplasm. The catalysed reaction is histamine + S-adenosyl-L-methionine = N(tau)-methylhistamine + S-adenosyl-L-homocysteine + H(+). Its function is as follows. Inactivates histamine by N-methylation. Plays an important role in degrading histamine and in regulating the airway response to histamine. This Xenopus laevis (African clawed frog) protein is Histamine N-methyltransferase A (hnmt-a).